Reading from the N-terminus, the 212-residue chain is UPF0502 protein ECA2523 (212 aa).

The protein belongs to the UPF0502 family.

The chain is UPF0502 protein ECA2523 from Pectobacterium atrosepticum (strain SCRI 1043 / ATCC BAA-672) (Erwinia carotovora subsp. atroseptica).